The primary structure comprises 204 residues: Holliday junction branch migration complex subunit RuvA (204 aa).

Residues 1–67 (MIDYLYGTLD…GGVISLYGFF (67 aa)) form a domain I region. The tract at residues 68–149 (TIEEREMYLL…TVNVLNKEKQ (82 aa)) is domain II. Residues 150 to 154 (TGAET) are flexible linker. The domain III stretch occupies residues 155 to 204 (IKNTMVSEAIAGLITLGYKMQQARVAVTNVYEHNENITLEDLIKKSLQYL).

This sequence belongs to the RuvA family. Homotetramer. Forms an RuvA(8)-RuvB(12)-Holliday junction (HJ) complex. HJ DNA is sandwiched between 2 RuvA tetramers; dsDNA enters through RuvA and exits via RuvB. An RuvB hexamer assembles on each DNA strand where it exits the tetramer. Each RuvB hexamer is contacted by two RuvA subunits (via domain III) on 2 adjacent RuvB subunits; this complex drives branch migration. In the full resolvosome a probable DNA-RuvA(4)-RuvB(12)-RuvC(2) complex forms which resolves the HJ.

It is found in the cytoplasm. The RuvA-RuvB-RuvC complex processes Holliday junction (HJ) DNA during genetic recombination and DNA repair, while the RuvA-RuvB complex plays an important role in the rescue of blocked DNA replication forks via replication fork reversal (RFR). RuvA specifically binds to HJ cruciform DNA, conferring on it an open structure. The RuvB hexamer acts as an ATP-dependent pump, pulling dsDNA into and through the RuvAB complex. HJ branch migration allows RuvC to scan DNA until it finds its consensus sequence, where it cleaves and resolves the cruciform DNA. This chain is Holliday junction branch migration complex subunit RuvA, found in Endomicrobium trichonymphae.